Reading from the N-terminus, the 426-residue chain is Potassium channel subfamily K member 2 (426 aa).

Topologically, residues 1–61 are cytoplasmic; sequence MLPSASRERP…TTINVMKWKT (61 aa). Important for GNG4 binding and L-glutamate release in astrocytes regions lie at residues 17–38 and 51–61; these read AAPD…LSFS and DTTINVMKWKT. A helical transmembrane segment spans residues 62–82; sequence VSTIFLVVVLYLIIGATVFKA. Residues Asn110 and Asn134 are each glycosylated (N-linked (GlcNAc...) asparagine). An intramembrane region (pore-forming) is located at residues 144–170; that stretch reads LGSSFFFAGTVITTIGFGNISPRTEGG. The K(+) site is built by Thr157, Ile158, Gly159, and Phe160. Residues 157 to 162 are selectivity filter 1; it reads TIGFGN. Residues 172–192 form a helical membrane-spanning segment; sequence IFCIIYALLGIPLFGFLLAGV. Residues 193 to 223 are Cytoplasmic-facing; the sequence is GDQLGTIFGKGIAKVEDTFIKWNVSQTKIRI. The helical transmembrane segment at 224–244 threads the bilayer; sequence ISTIIFILFGCVLFVALPAII. The segment at residues 253-283 is an intramembrane region (pore-forming); sequence ALDAIYFVVITLTTIGFGDYVAGGSDIEYLD. Residues Thr266, Ile267, Gly268, and Phe269 each coordinate K(+). A selectivity filter 2 region spans residues 266-271; it reads TIGFGD. The chain crosses the membrane as a helical span at residues 288 to 308; that stretch reads VVWFWILVGLAYFAAVLSMIG. Over 309-426 the chain is Cytoplasmic; sequence DWLRVISKKT…EEIAVIENIK (118 aa). The interaction with AKAP5 stretch occupies residues 313-326; it reads VISKKTKEEVGEFR. The segment at 337 to 385 is essential for chloroform and halothane sensitivity; it reads TAEFKETRRRLSVEIYDKFQRATSIKRKLSAELAGNHNQELTPCRRTLS. At Ser348 the chain carries Phosphoserine; by PKA.

This sequence belongs to the two pore domain potassium channel (TC 1.A.1.8) family. Homodimer; disulfide-linked. Forms heterodimers with other 2-pore domain K(+) channel subunits, such as KCNK1, KCNK4, KCNK10 and KCNK18. Interacts with AKAP5; the channel is recruited to postsynaptic microdomains by AKAP5 where it can integrate neurotransmitter receptor signals. Part of a complex composed of AKAP5 and ADRB2. Upon AKAP5 binding, the channel is no longer sensitive to intracellular acidification, membrane stretch or arachidonic acid stimuli. Interacts with POPDC1; the interaction enhances KCNK2 surface expression and is inhibited by cAMP. Interacts (via N-terminus) with G-protein subunit GNG4 (via C-terminus); this interaction confers ion selectivity to L-glutamate and Cl(-) anions. Post-translationally, phosphorylation at Ser-348 controls the reversible conversion from a leak channel to a voltage-dependent channel. Detected in kidney, adrenal gland and brain where it is preferentially expressed in the amygdala but not found in thalamus, hypothalamus, hippocampus or substantia nigra.

Its subcellular location is the cell membrane. It is found in the endoplasmic reticulum membrane. The protein resides in the cell projection. It localises to the axon. The protein localises to the dendrite. Its subcellular location is the postsynaptic density membrane. It is found in the sarcolemma. The enzyme catalyses K(+)(in) = K(+)(out). It catalyses the reaction L-glutamate(out) = L-glutamate(in). The catalysed reaction is chloride(in) = chloride(out). It carries out the reaction Rb(+)(in) = Rb(+)(out). The enzyme catalyses Cs(+)(in) = Cs(+)(out). Activated by various stimuli including intracellular acidic pH, mechanical stretch and polyunsaturated fatty acids such as arachidonic acid. Activated by volatile anesthetics such as chloroform, halothane, and isoflurane. K(+) channel that conducts voltage-dependent outward rectifying currents upon membrane depolarization. Voltage sensing is coupled to K(+) electrochemical gradient in an 'ion flux gating' mode where outward but not inward ion flow opens the gate. Converts to voltage-independent 'leak' conductance mode upon stimulation by various stimuli including mechanical membrane stretch, acidic pH, heat and lipids. Reversibly converts between a voltage-insensitive K(+) 'leak' channel and a voltage-dependent outward rectifying K(+) channel in a phosphorylation-dependent manner. Homo- and heterodimerizes to form functional channels with distinct regulatory and gating properties. In trigeminal ganglia sensory neurons, the heterodimer of KCNK2/TREK-1 and KCNK18/TRESK inhibits neuronal firing and neurogenic inflammation by stabilizing the resting membrane potential at K(+) equilibrium potential as well as by regulating the threshold of action potentials and the spike frequency. At trigeminal A-beta afferent nerves, the heterodimer of KCNK2/TREK-1 and KCNK4/TRAAK is mostly coexpressed at nodes of Ranvier where it conducts voltage-independent mechanosensitive and thermosensitive currents, allowing rapid action potential repolarization, high speed and high frequence saltatory conduction on myelinated nerves to ensure prompt sensory responses. In hippocampal astrocytes, the heterodimer of KCNK2/TREK-1 and KCNK1/TWIK-1 allows passive K(+) conductance under basal conditions, but changes ion selectivity and becomes permeable to L-glutamate and Cl(-) ions upon binding to G-protein subunit GNG4 in stimulated astrocytes. Mediates rapid L-glutamate release in response to activation of G-protein-coupled receptors, such as F2R and CNR1. In hippocampal pyramidal neurons, the homodimer of KCNK2/TREK-1 contributes to gamma-aminobutyric acid (GABA) B-induced slow inhibitory postsynaptic potential. Associates with AKAP5 and Gs-protein-coupled receptor B2AR at postsynaptic dense bodies and converts to a leak channel no longer sensitive to stimulation by arachidonic acid, acidic pH or mechanical stress, nor inhibited by Gq-coupled receptors but still under the negative control of Gs-coupled receptors. Permeable to other monovalent cations such as Rb(+) and Cs(+). In terms of biological role, does not display channel activity but reduces the channel activity of isoform 1 and isoform 2 and reduces cell surface expression of isoform 2. The chain is Potassium channel subfamily K member 2 from Homo sapiens (Human).